Reading from the N-terminus, the 457-residue chain is Argininosuccinate lyase (457 aa).

It belongs to the lyase 1 family. Argininosuccinate lyase subfamily.

The protein localises to the cytoplasm. It catalyses the reaction 2-(N(omega)-L-arginino)succinate = fumarate + L-arginine. The protein operates within amino-acid biosynthesis; L-arginine biosynthesis; L-arginine from L-ornithine and carbamoyl phosphate: step 3/3. The sequence is that of Argininosuccinate lyase from Klebsiella pneumoniae subsp. pneumoniae (strain ATCC 700721 / MGH 78578).